The following is a 181-amino-acid chain: Adenine phosphoribosyltransferase (181 aa).

It belongs to the purine/pyrimidine phosphoribosyltransferase family. Homodimer.

The protein localises to the cytoplasm. The catalysed reaction is AMP + diphosphate = 5-phospho-alpha-D-ribose 1-diphosphate + adenine. Its pathway is purine metabolism; AMP biosynthesis via salvage pathway; AMP from adenine: step 1/1. Its function is as follows. Catalyzes a salvage reaction resulting in the formation of AMP, that is energically less costly than de novo synthesis. This is Adenine phosphoribosyltransferase from Psychromonas ingrahamii (strain DSM 17664 / CCUG 51855 / 37).